A 430-amino-acid polypeptide reads, in one-letter code: Histidine--tRNA ligase (430 aa).

The protein belongs to the class-II aminoacyl-tRNA synthetase family. As to quaternary structure, homodimer.

It is found in the cytoplasm. It carries out the reaction tRNA(His) + L-histidine + ATP = L-histidyl-tRNA(His) + AMP + diphosphate + H(+). The sequence is that of Histidine--tRNA ligase from Anaplasma marginale (strain St. Maries).